A 103-amino-acid polypeptide reads, in one-letter code: Large ribosomal subunit protein bL21 (103 aa).

It belongs to the bacterial ribosomal protein bL21 family. As to quaternary structure, part of the 50S ribosomal subunit. Contacts protein L20.

This protein binds to 23S rRNA in the presence of protein L20. This Pectobacterium atrosepticum (strain SCRI 1043 / ATCC BAA-672) (Erwinia carotovora subsp. atroseptica) protein is Large ribosomal subunit protein bL21.